Reading from the N-terminus, the 631-residue chain is Hepatocyte nuclear factor 1-alpha (631 aa).

The interval 1-31 (MVSKLSQLQTELLAALLESGLSKEALIQALG) is dimerization. One can recognise an HNF-p1 domain in the interval 1–32 (MVSKLSQLQTELLAALLESGLSKEALIQALGE). A disordered region spans residues 40-81 (GEGPLDKGESCGGGRGELAELPNGLGETRGSEDETDDDGEDF). Serine 70 is modified (phosphoserine). Phosphothreonine is present on threonine 74. The POU-specific atypical domain occupies 87–182 (KELENLSPEE…VAQQFTHAGQ (96 aa)). The residue at position 93 (serine 93) is a Phosphoserine. Residue lysine 117 forms a Glycyl lysine isopeptide (Lys-Gly) (interchain with G-Cter in ubiquitin) linkage. Interaction with DNA stretches follow at residues 130 to 132 (QRE), 143 to 149 (HLSQHLN), 155 to 158 (KTQK), and 203 to 206 (RFKW). The tract at residues 183-205 (GGLIEEPTGDELPTKKGRRNRFK) is disordered. A Nuclear localization signal motif is present at residues 197–205 (KKGRRNRFK). Residues 199–279 (GRRNRFKWGP…NRRKEEAFRH (81 aa)) constitute a DNA-binding region (homeobox; HNF1-type). Serine 247 carries the phosphoserine modification. Interaction with DNA stretches follow at residues 263–265 (RVY) and 270–273 (NRRK). 2 disordered regions span residues 283 to 358 (MDTY…GLEP) and 545 to 567 (SDTEASSESGLHTPASQATTLHV). A compositionally biased stretch (pro residues) spans 288–298 (GPPPGPGPGPA). The residue at position 313 (serine 313) is a Phosphoserine. The segment covering 325 to 353 (PATSETAEVPSSSGGPLVTVSTPLHQVSP) has biased composition (polar residues).

It belongs to the HNF1 homeobox family. In terms of assembly, binds DNA as a dimer. Heterotetramer with PCBD1; formed by a dimer of dimers. Interacts with PCBD1. Interacts with BHLHE41. Interacts with NR5A2. Interacts with SPOP; this interaction promotes ubiquitination and degradation of HNF1A. In terms of processing, ubiquitinated in s SPOP-dependent manner; leading to prteasomal degradation. In terms of tissue distribution, liver.

The protein localises to the nucleus. Its function is as follows. Transcriptional activator that regulates the tissue specific expression of multiple genes, especially in pancreatic islet cells and in liver. Binds to the inverted palindrome 5'-GTTAATNATTAAC-3'. Activates the transcription of CYP1A2, CYP2E1 and CYP3A11. In terms of biological role, (Microbial infection) Plays a crucial role for hepatitis B virus gene transcription and DNA replication. Mechanistically, synergistically cooperates with NR5A2 to up-regulate the activity of one of the critical cis-elements in the hepatitis B virus genome enhancer II (ENII). This is Hepatocyte nuclear factor 1-alpha (HNF1A) from Homo sapiens (Human).